The primary structure comprises 135 residues: NADPH-dependent 7-cyano-7-deazaguanine reductase (135 aa).

The active-site Thioimide intermediate is the Cys-48. The active-site Proton donor is the Asp-55. Substrate is bound by residues 70–72 (LEL) and 89–90 (HE).

This sequence belongs to the GTP cyclohydrolase I family. QueF type 1 subfamily.

It is found in the cytoplasm. The enzyme catalyses 7-aminomethyl-7-carbaguanine + 2 NADP(+) = 7-cyano-7-deazaguanine + 2 NADPH + 3 H(+). Its pathway is tRNA modification; tRNA-queuosine biosynthesis. In terms of biological role, catalyzes the NADPH-dependent reduction of 7-cyano-7-deazaguanine (preQ0) to 7-aminomethyl-7-deazaguanine (preQ1). This Prochlorococcus marinus (strain SARG / CCMP1375 / SS120) protein is NADPH-dependent 7-cyano-7-deazaguanine reductase.